The sequence spans 426 residues: Deoxyguanosinetriphosphate triphosphohydrolase-like protein (426 aa).

Positions Met1–Ala23 are disordered. An HD domain is found at Arg67 to Ser217.

It belongs to the dGTPase family. Type 2 subfamily.

This chain is Deoxyguanosinetriphosphate triphosphohydrolase-like protein, found in Corynebacterium efficiens (strain DSM 44549 / YS-314 / AJ 12310 / JCM 11189 / NBRC 100395).